Here is a 417-residue protein sequence, read N- to C-terminus: Biofilm dispersion protein BdlA (417 aa).

The region spanning 1–66 (MAALDRSMAR…RRFWERLRRG (66 aa)) is the PAS 1 domain. Residues 67–114 (EHFSGRCKRITREGRPLWLEATYNPVRDGQGRLLKVVKYASDIDAIVH) enclose the PAC 1 domain. The PAS 2 domain occupies 115–188 (QEHEMQSKLD…ADLWRRLNRG (74 aa)). A PAC 2 domain is found at 191–241 (VTGQFRRVHRNGQPVWLEASYNPVYDADGKLYKVVKFASDVSDRMRRYQAE). In terms of domain architecture, Methyl-accepting transducer spans 242–417 (ADNAHQAHTL…QFSRTLNADL (176 aa)).

Essential for biofilm dispersion by sensing environmental cues. May be involved in sensing and transducing signals within cells, resulting in the modulation of c-di-GMP levels, swimming motility and adhesiveness of the bacterial cell surface. This chain is Biofilm dispersion protein BdlA (bdlA), found in Pseudomonas aeruginosa (strain ATCC 15692 / DSM 22644 / CIP 104116 / JCM 14847 / LMG 12228 / 1C / PRS 101 / PAO1).